The following is a 366-amino-acid chain: Inhibin alpha chain (366 aa).

The signal sequence occupies residues 1–18; it reads MVLHLLLFLLLTPQGGHS. A propeptide spanning residues 19-61 is cleaved from the precursor; that stretch reads CQGLELARELVLAKVRALFLDALGPPAVTREGGDPGVRRLPRR. Residues 62–232 constitute a propeptide, inhibin alpha N-terminal region; the sequence is HALGGFTHRG…PPSGGERARR (171 aa). N-linked (GlcNAc...) asparagine glycans are attached at residues Asn-146 and Asn-268. Disulfide bonds link Cys-262/Cys-328, Cys-291/Cys-363, and Cys-295/Cys-365. N-linked (GlcNAc...) asparagine; partial glycosylation occurs at Asn-302.

This sequence belongs to the TGF-beta family. Dimeric, linked by one or more disulfide bonds. Activin B is a dimer of alpha and beta-B. Inhibin A is a dimer of alpha and beta-A. Inhibin B is a dimer of alpha and beta-B. Interacts with TGFBR3L; this interaction regulates female fertility. Proteolytic processing yields a number of bioactive forms. The 20/23 kDa forms consist solely of the mature alpha chain, the 26/29 kDa forms consist of the most N-terminal propeptide linked through a disulfide bond to the mature alpha chain, the 50/53 kDa forms encompass the entire proprotein. Each type can be furthermore either mono- or diglycosylated, causing the mass difference. Originally found in ovary (granulosa cells) and testis (Sertoli cells), but widely distributed in many tissues including brain and placenta. In adrenal cortex expression is limited to the zona reticularis and the innermost zona fasciculata in the normal gland, extending centripetally into the zona fasciculata in hyperplasia. Also found in adrenocortical tumors. Also expressed in prostate epithelium of benign prostatic hyperplasia, in regions of basal cell hyperplasia and in nonmalignant regions of high grade prostate cancer. Only circulating inhibin B is found in male, whereas circulating inhibins A and B are found in female.

It is found in the secreted. In terms of biological role, inhibins and activins inhibit and activate, respectively, the secretion of follitropin by the pituitary gland. Inhibins/activins are involved in regulating a number of diverse functions such as hypothalamic and pituitary hormone secretion, gonadal hormone secretion, germ cell development and maturation, erythroid differentiation, insulin secretion, nerve cell survival, embryonic axial development or bone growth, depending on their subunit composition. Inhibins appear to oppose the functions of activins. Inhibin A is a dimer of alpha/INHA and beta-A/INHBA that functions as a feedback regulator in the hypothalamic-pituitary-gonadal (HPG) axis. Inhibits the secretion of FSH from the anterior pituitary gland by acting on pituitary gonadotrope cells. Antagonizes activin A by binding to the proteoglycan, betaglycan, and forming a stable complex with and, thereby, sequestering type II activin receptors while excluding type I receptor. Functionally, inhibin B is a dimer of alpha and beta-B that plays a crucial role in the regulation of the reproductive system by inhibiting the secretion of follicle-stimulating hormone (FSH) from the anterior pituitary gland. Thereby, maintains reproductive homeostasis in both males and females. Acts as a more potent suppressor of FSH release than inhibin A. Functions as competitive receptor antagonist binding activin type II receptors with high affinity in the presence of the TGF-beta type III coreceptor/TGFBR3L. This is Inhibin alpha chain (INHA) from Homo sapiens (Human).